A 245-amino-acid chain; its full sequence is High affinity immunoglobulin epsilon receptor subunit alpha (245 aa).

The signal sequence occupies residues 1-23 (MDTGGSARLCLALVLISLGVMLT). Over 24 to 204 (ATQKSVVSLD…DYTIEYRWLQ (181 aa)) the chain is Extracellular. 2 consecutive Ig-like domains span residues 28–103 (SVVS…KPVY) and 113–181 (LQSS…LNKV). The cysteines at positions 49 and 91 are disulfide-linked. N-linked (GlcNAc...) asparagine glycans are attached at residues N52, N53, N58, N65, N123, N158, and N167. C130 and C174 are oxidised to a cystine. Residues 205-223 (LIFPSLAVILFAVDTGLWF) traverse the membrane as a helical segment. Topologically, residues 224-245 (STHKQFESILKIQKTGKGKKKG) are cytoplasmic.

Tetramer of an alpha chain, a beta chain, and two disulfide linked gamma chains. Interacts with IGHE (via CH3 region). Expressed in leukocytes and pinealocytes at night (at protein level).

The protein resides in the cell membrane. The protein localises to the secreted. Functionally, high-affinity receptor for immunoglobulin epsilon/IgE. Mediates IgE effector functions in myeloid cells. Upon IgE binding and antigen/allergen cross-linking initiates signaling pathways that lead to myeloid cell activation and differentiation. On mast cells, basophils and eosinophils stimulates the secretion of vasoactive amines, lipid mediators and cytokines that contribute to inflammatory response, tissue remodeling and cytotoxicity against microbes. Triggers the immediate hypersensitivity response to allergens as a host defense mechanism against helminth parasites, pathogenic bacteria and venom toxicity. When dysregulated, it can elicit harmful life-threatening allergic and anaphylactic reactions. In Rattus norvegicus (Rat), this protein is High affinity immunoglobulin epsilon receptor subunit alpha (Fcer1a).